Consider the following 137-residue polypeptide: Nucleoside diphosphate kinase (137 aa).

Residues Lys-9, Phe-57, Arg-85, Thr-91, Arg-102, and Asn-112 each contribute to the ATP site. His-115 (pros-phosphohistidine intermediate) is an active-site residue.

This sequence belongs to the NDK family. Homotetramer. Mg(2+) is required as a cofactor.

The protein resides in the cytoplasm. It carries out the reaction a 2'-deoxyribonucleoside 5'-diphosphate + ATP = a 2'-deoxyribonucleoside 5'-triphosphate + ADP. It catalyses the reaction a ribonucleoside 5'-diphosphate + ATP = a ribonucleoside 5'-triphosphate + ADP. Major role in the synthesis of nucleoside triphosphates other than ATP. The ATP gamma phosphate is transferred to the NDP beta phosphate via a ping-pong mechanism, using a phosphorylated active-site intermediate. The polypeptide is Nucleoside diphosphate kinase (Thermus thermophilus (strain ATCC BAA-163 / DSM 7039 / HB27)).